Reading from the N-terminus, the 396-residue chain is Gap junction gamma-1 protein (396 aa).

Over 1–22 the chain is Cytoplasmic; it reads MSWSFLTRLLEEIHNHSTFVGK. The helical transmembrane segment at 23-45 threads the bilayer; sequence IWLTVLIVFRIVLTAVGGESIYY. At 46–75 the chain is on the extracellular side; it reads DEQSKFVCNTEQPGCENVCYDAFAPLSHVR. Residues 76 to 95 form a helical membrane-spanning segment; it reads FWVFQIILVATPSVMYLGYA. Residues 96-175 lie on the Cytoplasmic side of the membrane; it reads IHKIAKMEHG…RRIREDGLMK (80 aa). A disordered region spans residues 146-165; sequence LESEKENKDQNQSKPKHDGR. The span at 147 to 156 shows a compositional bias: basic and acidic residues; the sequence is ESEKENKDQN. A helical membrane pass occupies residues 176–198; it reads IYVLQLLARTVFEVGFLVGQYFL. At 199-228 the chain is on the extracellular side; the sequence is YGFQVHPFYVCSRLPCPHKIDCFISRPTEK. Residues 229-248 traverse the membrane as a helical segment; sequence TIFLLIMYGVTGLCLLLNIW. Over 249–396 the chain is Cytoplasmic; sequence EMLHLGFGTI…SGDGKTSVWI (148 aa). The segment at 356 to 396 is disordered; sequence YNHQNNPHGSREKKAKVGSKAGSNKSSASSKSGDGKTSVWI. A compositionally biased stretch (low complexity) spans 373–396; it reads GSKAGSNKSSASSKSGDGKTSVWI.

The protein belongs to the connexin family. Gamma-type subfamily. As to quaternary structure, a connexon is composed of a hexamer of connexins. Interacts with CNST.

The protein localises to the cell membrane. The protein resides in the cell junction. It localises to the gap junction. Functionally, one gap junction consists of a cluster of closely packed pairs of transmembrane channels, the connexons, through which materials of low MW diffuse from one cell to a neighboring cell. The chain is Gap junction gamma-1 protein (GJC1) from Bos taurus (Bovine).